We begin with the raw amino-acid sequence, 156 residues long: Ribosome maturation factor RimP (156 aa).

The protein belongs to the RimP family.

The protein resides in the cytoplasm. Required for maturation of 30S ribosomal subunits. The protein is Ribosome maturation factor RimP of Fusobacterium nucleatum subsp. nucleatum (strain ATCC 25586 / DSM 15643 / BCRC 10681 / CIP 101130 / JCM 8532 / KCTC 2640 / LMG 13131 / VPI 4355).